A 256-amino-acid chain; its full sequence is Omega-amidase YafV (256 aa).

The 231-residue stretch at Leu4 to Leu234 folds into the CN hydrolase domain. Glu42 serves as the catalytic Proton acceptor. Residue Lys107 is part of the active site. The active-site Nucleophile is the Cys141.

The protein belongs to the carbon-nitrogen hydrolase superfamily. NIT1/NIT2 family.

It catalyses the reaction a monoamide of a dicarboxylate + H2O = a dicarboxylate + NH4(+). In terms of biological role, hydrolyzes alpha-ketoglutaramate (a-KGM) to alpha-ketoglutarate (alpha-KG) and ammonia (specific activity 21 umol/min/mg), has very weak activity on L-glutamine, and no activity on deaminated glutathione (dGSH) or glutathione. May function as a metabolite repair enzyme. This chain is Omega-amidase YafV, found in Yersinia enterocolitica.